Reading from the N-terminus, the 439-residue chain is Histidinol dehydrogenase (439 aa).

Residues Y125, Q187, and N210 each coordinate NAD(+). Substrate is bound by residues T233, Q255, and H258. The Zn(2+) site is built by Q255 and H258. Residues E323 and H324 each act as proton acceptor in the active site. Substrate contacts are provided by H324, D357, E411, and H416. D357 contacts Zn(2+). Position 416 (H416) interacts with Zn(2+).

The protein belongs to the histidinol dehydrogenase family. It depends on Zn(2+) as a cofactor.

It carries out the reaction L-histidinol + 2 NAD(+) + H2O = L-histidine + 2 NADH + 3 H(+). Its pathway is amino-acid biosynthesis; L-histidine biosynthesis; L-histidine from 5-phospho-alpha-D-ribose 1-diphosphate: step 9/9. Catalyzes the sequential NAD-dependent oxidations of L-histidinol to L-histidinaldehyde and then to L-histidine. This Symbiobacterium thermophilum (strain DSM 24528 / JCM 14929 / IAM 14863 / T) protein is Histidinol dehydrogenase.